The sequence spans 782 residues: Endonuclease MutS2 (782 aa).

336 to 343 (GPNTGGKT) provides a ligand contact to ATP. Residues 707 to 782 (LDLRGYRYED…GFGVTVATLK (76 aa)) form the Smr domain.

This sequence belongs to the DNA mismatch repair MutS family. MutS2 subfamily. As to quaternary structure, homodimer. Binds to stalled ribosomes, contacting rRNA.

Its function is as follows. Endonuclease that is involved in the suppression of homologous recombination and thus may have a key role in the control of bacterial genetic diversity. In terms of biological role, acts as a ribosome collision sensor, splitting the ribosome into its 2 subunits. Detects stalled/collided 70S ribosomes which it binds and splits by an ATP-hydrolysis driven conformational change. Acts upstream of the ribosome quality control system (RQC), a ribosome-associated complex that mediates the extraction of incompletely synthesized nascent chains from stalled ribosomes and their subsequent degradation. Probably generates substrates for RQC. The sequence is that of Endonuclease MutS2 from Staphylococcus aureus (strain JH1).